The chain runs to 283 residues: Shikimate kinase (283 aa).

86–96 contacts ATP; it reads PIKSGLSSSSA.

The protein belongs to the GHMP kinase family. Archaeal shikimate kinase subfamily.

The protein resides in the cytoplasm. It catalyses the reaction shikimate + ATP = 3-phosphoshikimate + ADP + H(+). It participates in metabolic intermediate biosynthesis; chorismate biosynthesis; chorismate from D-erythrose 4-phosphate and phosphoenolpyruvate: step 5/7. The protein is Shikimate kinase of Methanococcus maripaludis (strain C5 / ATCC BAA-1333).